We begin with the raw amino-acid sequence, 387 residues long: 2-alkyl-3-oxoalkanoate reductase (387 aa).

Catalysis depends on tyrosine 190, which acts as the Proton acceptor. Position 194 (lysine 194) interacts with NADP(+).

It belongs to the 3-beta-HSD family.

The catalysed reaction is a (2R,3S)-2-alkyl-3-hydroxyalkanoate + NADP(+) = an (R)-2-alkyl-3-oxoalkanoate + NADPH + H(+). Its function is as follows. Involved in olefin biosynthesis. Catalyzes the reversible stereospecific NADPH-dependent reduction of 2-alkyl-3-oxoalkanoic acids to 2-alkyl-3-hydroxyalkanoic acids. The S.oneidensis oleABCD genes produce 3,6,9,12,15,19,22,25,28-hentriacontanonaene, which may aid the cells in adapting to a sudden drop in temperature. This Shewanella oneidensis (strain ATCC 700550 / JCM 31522 / CIP 106686 / LMG 19005 / NCIMB 14063 / MR-1) protein is 2-alkyl-3-oxoalkanoate reductase.